The sequence spans 976 residues: Vacuolar membrane protease (976 aa).

Over 1–15 the chain is Cytoplasmic; the sequence is MKLKSVFRSVLKYRK. A helical membrane pass occupies residues 16–36; that stretch reads TNLSLLLLITYSIITLLYIFD. At 37-359 the chain is on the vacuolar side; the sequence is HERYKLNLPK…KFFVISAKTL (323 aa). N-linked (GlcNAc...) asparagine glycosylation is found at N96 and N121. Positions 156 and 168 each coordinate Zn(2+). Residue N189 is glycosylated (N-linked (GlcNAc...) asparagine). The active-site Proton acceptor is E200. E201 is a Zn(2+) binding site. N-linked (GlcNAc...) asparagine glycans are attached at residues N212 and N217. E226 and H300 together coordinate Zn(2+). A helical membrane pass occupies residues 360-380; sequence FYWNCIFLLVSPVVAIGLYLI. Over 381-392 the chain is Cytoplasmic; sequence SRDRMTWKSHSW. Residues 393–412 traverse the membrane as a helical segment; it reads LSWTRFPLSLAAGIIVQKLF. At 413-428 the chain is on the vacuolar side; sequence SNDIIRSNPLTFSRNY. The helical transmembrane segment at 429-449 threads the bilayer; it reads FWPISAFFTQVIFTSYVLINC. Residues 450–461 lie on the Cytoplasmic side of the membrane; that stretch reads SNFFFPCADMKS. A helical transmembrane segment spans residues 462–482; sequence LSIIELFIILWTILLFTSKLL. Residues 483–496 lie on the Vacuolar side of the membrane; that stretch reads YSSDYRYTGLYPLS. The chain crosses the membrane as a helical span at residues 497 to 517; sequence IFFLLSTIAAILRLLALALGM. At 518 to 627 the chain is on the cytoplasmic side; it reads RTRKRLGREC…NSLKLEYTDY (110 aa). The tract at residues 528 to 610 is disordered; it reads RDHHSNYSSH…PLLKGSNSME (83 aa). Positions 549 to 558 are enriched in polar residues; sequence NLEQPQDQFT. A compositionally biased stretch (low complexity) spans 559 to 570; sequence SSQDDQASIQDD. The segment covering 582-601 has biased composition (basic and acidic residues); that stretch reads NVDEDHGMDSSSQQHDERVP. The helical transmembrane segment at 628–648 threads the bilayer; that stretch reads AWIIQFLLIVPIPSFILFNSV. Residues 649–668 are Vacuolar-facing; the sequence is DVIMDALNHTVQEGSKATFD. The N-linked (GlcNAc...) asparagine glycan is linked to N656. Residues 669–689 traverse the membrane as a helical segment; it reads VLRFGMVGSILIALPILPFFY. Residues 690 to 692 lie on the Cytoplasmic side of the membrane; it reads KVN. A helical transmembrane segment spans residues 693-713; sequence YITISLTALLFLISASKTLLV. Over 714-976 the chain is Vacuolar; it reads HPFTNSNPLK…LVIVKDAIIL (263 aa). Residues N768, N796, N811, N866, and N937 are each glycosylated (N-linked (GlcNAc...) asparagine).

This sequence belongs to the peptidase M28 family. Zn(2+) serves as cofactor.

The protein resides in the vacuole membrane. May be involved in vacuolar sorting and osmoregulation. This chain is Vacuolar membrane protease, found in Saccharomyces cerevisiae (strain JAY291) (Baker's yeast).